Here is a 168-residue protein sequence, read N- to C-terminus: Peptide deformylase (168 aa).

Positions 92 and 134 each coordinate Fe cation. Residue glutamate 135 is part of the active site. Position 138 (histidine 138) interacts with Fe cation.

This sequence belongs to the polypeptide deformylase family. It depends on Fe(2+) as a cofactor.

The enzyme catalyses N-terminal N-formyl-L-methionyl-[peptide] + H2O = N-terminal L-methionyl-[peptide] + formate. In terms of biological role, removes the formyl group from the N-terminal Met of newly synthesized proteins. Requires at least a dipeptide for an efficient rate of reaction. N-terminal L-methionine is a prerequisite for activity but the enzyme has broad specificity at other positions. The polypeptide is Peptide deformylase (Azotobacter vinelandii (strain DJ / ATCC BAA-1303)).